The sequence spans 310 residues: MSGERAKRFPLALEDLKRAPRKSEGRPGERQAAGAVPKAADKPAAVLKPVAVKPAAVRAPLPGIAAAKPATAPKPTAPKPALPKPAAPSIAPAGAFALTSERVRERMVERLRANGVTDARVLDAMAAVPRHLFVDPGLATQAYEDSALPIGHQQTISKPSVVARMIELAMAGRTLERVLEIGTGCGYQAAVLSHVARDVYSIERIKPLYERAKLNLRPLRVPNIRLHYGDGRVGLPSAAPFDAIVIAAAGLDVPQALLEQLAIGGRLVAPVGAQSGQHQVLTLVERVAHAQWRESRLDRVFFVPLKSGVI.

Disordered stretches follow at residues 1–44 (MSGE…DKPA) and 67–88 (AKPA…PAAP). Positions 14–29 (EDLKRAPRKSEGRPGE) are enriched in basic and acidic residues. Residues 32–44 (AAGAVPKAADKPA) are compositionally biased toward low complexity. Residues 75–86 (PTAPKPALPKPA) are compositionally biased toward pro residues. S157 is a catalytic residue.

Belongs to the methyltransferase superfamily. L-isoaspartyl/D-aspartyl protein methyltransferase family.

It localises to the cytoplasm. It carries out the reaction [protein]-L-isoaspartate + S-adenosyl-L-methionine = [protein]-L-isoaspartate alpha-methyl ester + S-adenosyl-L-homocysteine. Its function is as follows. Catalyzes the methyl esterification of L-isoaspartyl residues in peptides and proteins that result from spontaneous decomposition of normal L-aspartyl and L-asparaginyl residues. It plays a role in the repair and/or degradation of damaged proteins. This chain is Protein-L-isoaspartate O-methyltransferase, found in Burkholderia orbicola (strain MC0-3).